A 253-amino-acid polypeptide reads, in one-letter code: ER membrane protein complex subunit 3 (253 aa).

A run of 3 helical transmembrane segments spans residues 10–30 (WVLLPISIVMVLTGVLKQYIM), 126–146 (FIPQTIIMWWVNHFFAGFILM), and 176–196 (SISWYFISVLGLNPVYNLIGL).

This sequence belongs to the EMC3 family. In terms of assembly, component of the ER membrane protein complex (EMC), which is composed of EMC1, EMC2, EMC3, EMC4, EMC5 and EMC6.

It is found in the endoplasmic reticulum membrane. The EMC seems to be required for efficient folding of proteins in the endoplasmic reticulum (ER). In Saccharomyces cerevisiae (strain YJM789) (Baker's yeast), this protein is ER membrane protein complex subunit 3 (AIM27).